Consider the following 157-residue polypeptide: Transcriptional repressor NrdR (157 aa).

A zinc finger lies at 3-34 (CPSCQNTDSRVLESRSADAGKCVRRRRECLNC). Positions 49 to 139 (VTVIKRSNAK…VYRQFNGIED (91 aa)) constitute an ATP-cone domain.

The protein belongs to the NrdR family. Zn(2+) serves as cofactor.

Functionally, negatively regulates transcription of bacterial ribonucleotide reductase nrd genes and operons by binding to NrdR-boxes. This Prochlorococcus marinus (strain SARG / CCMP1375 / SS120) protein is Transcriptional repressor NrdR.